Consider the following 40-residue polypeptide: Large ribosomal subunit protein bL36 (40 aa).

It belongs to the bacterial ribosomal protein bL36 family.

The chain is Large ribosomal subunit protein bL36 from Corynebacterium urealyticum (strain ATCC 43042 / DSM 7109).